Here is a 424-residue protein sequence, read N- to C-terminus: UDP-N-acetylglucosamine 1-carboxyvinyltransferase (424 aa).

22 to 23 (KN) is a phosphoenolpyruvate binding site. R96 lines the UDP-N-acetyl-alpha-D-glucosamine pocket. C120 (proton donor) is an active-site residue. C120 is subject to 2-(S-cysteinyl)pyruvic acid O-phosphothioketal. UDP-N-acetyl-alpha-D-glucosamine is bound by residues 125–129 (RPVDQ), D312, and I334.

It belongs to the EPSP synthase family. MurA subfamily.

It is found in the cytoplasm. It carries out the reaction phosphoenolpyruvate + UDP-N-acetyl-alpha-D-glucosamine = UDP-N-acetyl-3-O-(1-carboxyvinyl)-alpha-D-glucosamine + phosphate. It participates in cell wall biogenesis; peptidoglycan biosynthesis. Cell wall formation. Adds enolpyruvyl to UDP-N-acetylglucosamine. The polypeptide is UDP-N-acetylglucosamine 1-carboxyvinyltransferase (Polynucleobacter necessarius subsp. necessarius (strain STIR1)).